The sequence spans 91 residues: Small ribosomal subunit protein uS19 (91 aa).

This sequence belongs to the universal ribosomal protein uS19 family.

In terms of biological role, protein S19 forms a complex with S13 that binds strongly to the 16S ribosomal RNA. The protein is Small ribosomal subunit protein uS19 of Lachnospira eligens (strain ATCC 27750 / DSM 3376 / VPI C15-48 / C15-B4) (Eubacterium eligens).